We begin with the raw amino-acid sequence, 939 residues long: Collagen-like protein 3 (939 aa).

N-linked (GlcNAc...) asparagine; by host glycans are attached at residues Asn15, Asn35, Asn39, and Asn82. The segment covering 84–95 (SGSSGPSGPQGP) has biased composition (low complexity). Disordered regions lie at residues 84–332 (SGSS…DLGN) and 358–697 (SIKG…KGEA). Collagen-like domains lie at 88–147 (GPSG…NGDK), 148–207 (GNKG…KGDK), 211–330 (GNKG…SPDL), 364–423 (GDKG…SGAD), 427–486 (GDKG…KGEK), 493–552 (GESG…KGSK), 564–622 (GDKG…KGDV), and 638–697 (GDKG…KGEA). Composition is skewed to basic and acidic residues over residues 96–110 (KGEK…DKGE), 123–182 (DADK…DPGI), 189–230 (DADK…DIGL), 237–260 (DADK…DIGP), 267–288 (DADK…KGTK), 297–314 (KGDK…DKGE), 360–371 (KGDKGDKGDTGL), 378–416 (DADK…DTGL), 423–491 (DADK…DVGI), 498–527 (DADK…DTGI), 537–552 (KGDK…KGSK), 560–580 (KGDK…DIGI), and 589–684 (KGDK…DKGD). Asn788, Asn820, Asn858, Asn919, and Asn925 each carry an N-linked (GlcNAc...) asparagine; by host glycan. The tract at residues 896–923 (NGETGAPTTDSGTNYGAGGGGGGNGTQG) is disordered. Gly residues predominate over residues 910–923 (YGAGGGGGGNGTQG).

In terms of processing, may be hydroxylated on lysine by the viral-encoded procollagen-lysine,2-oxoglutarate 5-dioxygenase.

The protein localises to the virion. Functionally, may participate in the formation of a layer of cross-linked glycosylated fibrils at the viral surface thus giving it a hairy-like appearance. The chain is Collagen-like protein 3 from Acanthamoeba polyphaga (Amoeba).